The sequence spans 298 residues: Glutamyl-Q tRNA(Asp) synthetase (298 aa).

L-glutamate-binding positions include arginine 8 to serine 12 and glutamate 44. The 'HIGH' region motif lies at proline 11–serine 21. Residues cysteine 100, cysteine 102, tyrosine 123, and cysteine 127 each coordinate Zn(2+). Residues tyrosine 183 and arginine 201 each contribute to the L-glutamate site. A 'KMSKS' region motif is present at residues lysine 239–glutamine 243. ATP is bound at residue lysine 242.

The protein belongs to the class-I aminoacyl-tRNA synthetase family. GluQ subfamily. Requires Zn(2+) as cofactor.

Its function is as follows. Catalyzes the tRNA-independent activation of glutamate in presence of ATP and the subsequent transfer of glutamate onto a tRNA(Asp). Glutamate is transferred on the 2-amino-5-(4,5-dihydroxy-2-cyclopenten-1-yl) moiety of the queuosine in the wobble position of the QUC anticodon. The sequence is that of Glutamyl-Q tRNA(Asp) synthetase from Burkholderia orbicola (strain AU 1054).